Consider the following 147-residue polypeptide: Large ribosomal subunit protein bL9 (147 aa).

Belongs to the bacterial ribosomal protein bL9 family.

Functionally, binds to the 23S rRNA. The sequence is that of Large ribosomal subunit protein bL9 from Mycoplasma capricolum subsp. capricolum (strain California kid / ATCC 27343 / NCTC 10154).